The primary structure comprises 372 residues: MQARRLMMSNTMNYMKAATACIDLVALQHNLQLIKQQAPHSKLMAVVKANGYGHGLRHVAKHAVGADAFGVARIEEALQLRACGVVKPILLLEGFYSSGDLPVLVTNNIQTVVHCEEQLRDLENAELETPVVVWLKIDSGMHRLGVRPEQYQAFVERLHQCPNVAKPLRYMSHFGCADEMNNEMTPKQIELFLSLTRGCKGERSLAASAGLLAWQESQLEWVRPGIIMYGVSPFGDKTASELGYKPVMTLKSHLIAVRDVKAGESVGYGATWISERDTKVGVIAIGYGDGYPRTAPNGTPVLVNGRKVPIAGRVSMDMLTVDLGPDATDHVGDEAILWGADLPAEDVAQHIGTIAYELVTKLTSRVEMSYSE.

Catalysis depends on Lys-48, which acts as the Proton acceptor; specific for D-alanine. Lys-48 carries the post-translational modification N6-(pyridoxal phosphate)lysine. Residue Arg-143 participates in substrate binding. The Proton acceptor; specific for L-alanine role is filled by Tyr-268. Met-316 is a binding site for substrate.

This sequence belongs to the alanine racemase family. The cofactor is pyridoxal 5'-phosphate.

The enzyme catalyses L-alanine = D-alanine. The protein operates within amino-acid biosynthesis; D-alanine biosynthesis; D-alanine from L-alanine: step 1/1. Functionally, catalyzes the interconversion of L-alanine and D-alanine. May also act on other amino acids. The sequence is that of Alanine racemase (alr) from Vibrio vulnificus (strain YJ016).